Consider the following 280-residue polypeptide: Trypsin zeta (280 aa).

A signal peptide spans 1–22; that stretch reads MSSSWIVGLLAFLVSLVALTQG. A propeptide spans 23-38 (activation peptide); the sequence is LPLLEDLDEKSVPDGR. The Peptidase S1 domain maps to 39–278; it reads IVGGYATDIA…LRPWIDAVLA (240 aa). Cysteine 72 and cysteine 88 form a disulfide bridge. Catalysis depends on charge relay system residues histidine 87 and aspartate 134. 2 disulfide bridges follow: cysteine 198-cysteine 218 and cysteine 230-cysteine 254. Serine 234 serves as the catalytic Charge relay system.

It belongs to the peptidase S1 family.

Its subcellular location is the secreted. The protein localises to the extracellular space. It carries out the reaction Preferential cleavage: Arg-|-Xaa, Lys-|-Xaa.. The chain is Trypsin zeta (zetaTry) from Drosophila melanogaster (Fruit fly).